A 560-amino-acid polypeptide reads, in one-letter code: DNA ligase B (560 aa).

The N6-AMP-lysine intermediate role is filled by lysine 124.

This sequence belongs to the NAD-dependent DNA ligase family. LigB subfamily.

The enzyme catalyses NAD(+) + (deoxyribonucleotide)n-3'-hydroxyl + 5'-phospho-(deoxyribonucleotide)m = (deoxyribonucleotide)n+m + AMP + beta-nicotinamide D-nucleotide.. In terms of biological role, catalyzes the formation of phosphodiester linkages between 5'-phosphoryl and 3'-hydroxyl groups in double-stranded DNA using NAD as a coenzyme and as the energy source for the reaction. The chain is DNA ligase B from Shigella flexneri serotype 5b (strain 8401).